The chain runs to 421 residues: 3-alpha-mycarosylerythronolide B desosaminyl transferase (421 aa).

An N-terminal signal peptide occupies residues 1-23 (MRVVFSSMASKSHLFGLVPLAWA).

The protein belongs to the glycosyltransferase 28 family. Heterotetramer composed of EryCII and EryCIII.

It carries out the reaction 3-O-alpha-L-mycarosylerythronolide B + dTDP-alpha-D-desosamine = erythromycin D + dTDP + H(+). It functions in the pathway antibiotic biosynthesis; erythromycin biosynthesis. In terms of biological role, catalyzes the conversion of alpha-L-mycarosylerythronolide B into erythromycin D in the erythromycin biosynthesis pathway. This is 3-alpha-mycarosylerythronolide B desosaminyl transferase (eryCIII) from Saccharopolyspora erythraea (strain ATCC 11635 / DSM 40517 / JCM 4748 / NBRC 13426 / NCIMB 8594 / NRRL 2338).